A 90-amino-acid chain; its full sequence is MAHKKAGGSSRNGRDSESKRLGVKKFGGEVVIPGNIIVRQRGTQWHPGANVGMGKDHTIFALTTGNVTYRTKSNGRVFVSVMPKTAEAAE.

The segment at 1–22 (MAHKKAGGSSRNGRDSESKRLG) is disordered.

It belongs to the bacterial ribosomal protein bL27 family.

The polypeptide is Large ribosomal subunit protein bL27 (Allorhizobium ampelinum (strain ATCC BAA-846 / DSM 112012 / S4) (Agrobacterium vitis (strain S4))).